The following is a 377-amino-acid chain: Signal peptide peptidase (377 aa).

Residues 1 to 27 (MDSALSDPHNGSAEAGGPTNSTTRPPS) are disordered. The Lumenal segment spans residues 1–31 (MDSALSDPHNGSAEAGGPTNSTTRPPSTPEG). N-linked (GlcNAc...) asparagine glycosylation is found at Asn10 and Asn20. A helical transmembrane segment spans residues 32 to 52 (IALAYGSLLLMALLPIFFGAL). At 53–77 (RSVRCARGKNASDMPETITSRDAAR) the chain is on the cytoplasmic side. The helical transmembrane segment at 78-98 (FPIIASCTLLGLYLFFKIFSQ) threads the bilayer. The Lumenal portion of the chain corresponds to 99–100 (EY). Residues 101–121 (INLLLSMYFFVLGILALSHTI) form a helical membrane-spanning segment. The Cytoplasmic portion of the chain corresponds to 122–157 (SPFMNKFFPASFPNRQYQLLFTQGSGENKEEIINYE). The chain crosses the membrane as a helical span at residues 158 to 178 (FDTKDLVCLGLSSIVGVWYLL). Residues 179-181 (RKH) lie on the Lumenal side of the membrane. Residues 182 to 202 (WIANNLFGLAFSLNGVELLHL) traverse the membrane as a helical segment. Residues 203–209 (NNVSTGC) are Cytoplasmic-facing. The helical transmembrane segment at 210 to 230 (ILLGGLFIYDVFWVFGTNVMV) threads the bilayer. Asp219 is a catalytic residue. Over 231–256 (TVAKSFEAPIKLVFPQDLLEKGLEAN) the chain is Lumenal. A helical membrane pass occupies residues 257–277 (NFAMLGLGDVVIPGIFIALLL). Residue Asp265 is part of the active site. Topologically, residues 278–290 (RFDISLKKNTHTY) are cytoplasmic. Residues 291-311 (FYTSFAAYIFGLGLTIFIMHI) traverse the membrane as a helical segment. Residues 312 to 314 (FKH) lie on the Lumenal side of the membrane. The chain crosses the membrane as a helical span at residues 315–335 (AQPALLYLVPACIGFPVLVAL). The PAL motif lies at 317–319 (PAL). The Cytoplasmic portion of the chain corresponds to 336-377 (AKGEVTEMFSYEESNPKDPAAVTESKEGTEASASKGLEKKEK). The tract at residues 345-377 (SYEESNPKDPAAVTESKEGTEASASKGLEKKEK) is disordered. Phosphoserine is present on Ser367.

This sequence belongs to the peptidase A22B family. In terms of assembly, monomer. Homodimer. Interacts with RNF139. Interacts with DERL1 and XBP1 isoform 1. N-glycosylated. In terms of tissue distribution, widely expressed with highest levels in kidney, liver, placenta, lung, leukocytes and small intestine and reduced expression in heart and skeletal muscle. Expressed abundantly in the CNS with highest levels in thalamus and medulla.

It is found in the endoplasmic reticulum membrane. The protein resides in the membrane. The protein localises to the cell membrane. In terms of biological role, catalyzes intramembrane proteolysis of signal peptides that have been removed from precursors of secretory and membrane proteins, resulting in the release of the fragment from the ER membrane into the cytoplasm. Required to generate lymphocyte cell surface (HLA-E) epitopes derived from MHC class I signal peptides. May be necessary for the removal of the signal peptide that remains attached to the hepatitis C virus core protein after the initial proteolytic processing of the polyprotein. Involved in the intramembrane cleavage of the integral membrane protein PSEN1. Cleaves the integral membrane protein XBP1 isoform 1 in a DERL1/RNF139-dependent manner. May play a role in graft rejection. The polypeptide is Signal peptide peptidase (Homo sapiens (Human)).